Consider the following 171-residue polypeptide: Secreted LysM effector Blys4 (171 aa).

One can recognise a LysM domain in the interval K125 to L169.

Belongs to the secreted LysM effector family.

Functionally, might have a role in sequestration of chitin oligosaccharides (breakdown products of fungal cell walls that are released during invasion and act as triggers of host immunity) to dampen host defense. In Beauveria bassiana (strain ARSEF 2860) (White muscardine disease fungus), this protein is Secreted LysM effector Blys4.